The following is a 1897-amino-acid chain: MELNGIRRRLATAKEAERHRLLLELIRAAAAEALDRPGPLPLDPGRAFGAQGVRGRAAGRLRERLSEATGLPLPATVVFDYPTPGALAGRLCALLLDEPAGPGGANGQMEAEEPIAIVGMGCRLPGDVRSPEGLWRLVHNGTDAISEFPEDRGWTVQQHPDPDHLGTTVTRHAGFLYDAPDFDAGFFAISPGEAVTIDPQHRLLLETTWKAVEDARIDPTSLRGSRTGVFVGLMYSEYGARIRRVPPGAEGYRVVGSMPSVASGRLAYTFGFEGPAVTVDTACSSSLVAMHLAAQSLRKGECTLAVAGGATVMATPWGYIEFSRQRGLAPDGRCRSFSADAAGSSWSEGVGVLLLERLSDARRHGHRVLAVVRGSAVNQDGASNGLTAPNGPAQQRVIRQALAHAGLTTAEVDAVDAHGAGTRLGDPIEAQALLATYGQGRPAGRPLWLGSLKSNIGHTQAAAGAAGVIKMVMAMRHGVLPRSLHITEPTPHVDWTSGAVELLTEARDWPADGRPRRAAVSSFGVGGTNAHIILEQAAPEPERPHAPEADGEPRPLPWPVSGHGAAGLRAQARRLADFLRAGPAAPDADLAYSLATTRATLTDRAVVVAADRAEAIARLTALAEGDQGPRVARATAVPRDRLAFVFPGQGSQWPGMAAELMSCYPVFRESIKECGRSLAPHTDWSLAKVLRGESGAPTLDRVDVVQPALFAVMVSLAALWRSFGVEPSAVAGHSQGEIAAARVAGALSLEDAARVVALRSRALRVLSGRGGMVSVAAPAGQVLRTLERWGGAVSVAAVNGPRSLVISGDPGALGEALAAFEAEGIRARRIPVDYASHSAQVEEIRDTLLTELSGIRPRPATVPFYSTVSGEPLDTTALDTGYWVRNLRDTVQFDRTVRRLLADGHTTFLEMSPHPVLTPGIQETAEEAGADEVLTVESLRRNEGGPARLLTAVAEAHVHGVAVDWSPAFAPHRSPARRPAVLRLSSGAATGLRTRPRPPPMFTTAGLDGIDHPLLGAAIPLADGGGGTLFTGTLSLATHPWLADHAVADVLVVPGTALVEAALRAGAECTGRAMLEELVLQAPLILPEQGTVRIQLSVGGPDGTGRRALILSSRPEDAGADEPWTRHAEGTLAPGGGHPRQDPGPWPPTGAREIDLDDCYRQLAKTGLHYGPAFQGLKRLWRLADDLCLEAELPDSAGESGRYGLHPALFDAALHAAALAGPSGAEPLTRLPFSWSGVALYTAGATRLRARLSFTGPQSLTLTAMDPLGHPVLSVGTLGMRPVTAEALHRAAGTAGTALLRLEWRRQAPEHPAGPDLTGWAWVGAGAPPAQPPDGRPYRDLAALRAELDAGAAVPPVIVLAEPATPEGTDPFTAARAALHRTLAAIQDWAAEERLAGTRLVVLTQGAVAATPGALPDPALAAVWGLVRSAQAEYPDRIGLVDTDDPGRSRAAVAAAVHAGEAQAAVRDGALLVPRLARVTATDGPGGPAWPADGTVLVTGGLGTLGRLVVRHLVTTHGARRLVILSRSGGDSAEVREFVGELLAQGANVQVVKGDAADPAVLERVLDGIPQEHPLAAVAHLAGALDDGVLAAQTPQRLDRVLRPKAEAAWQLHRLTARARVPLLAFSSLSGVLGPAGQAGYAAANAFVDALVQRRRGTGLPGVSMGWGMWATRSGLTGALSDTDARLIARTGVRPLTDEEGLALFDQARATGEPVVFPLGLDITALNSGAPDGIPPLLRGLTARTPARRAGAAEAPEPAGEDLAARLAATPEAERDALLLGVVRGHIAAVLGYDDPRAVAERRPFSDIGFDSLRALQLRNRLGAATGRRLPATLVFDHPNPAALSRYLRTLLLPDPAPAPTAPDGQPGPDQADQVIERLNSASLEEVLDFIDHQLGE.

Residues 112–536 (EEPIAIVGMG…GTNAHIILEQ (425 aa)) enclose the Ketosynthase family 3 (KS3) domain. Residues Cys-283, His-418, and His-458 each act as for beta-ketoacyl synthase activity in the active site. The tract at residues 538–563 (APEPERPHAPEADGEPRPLPWPVSGH) is disordered. The segment covering 540-553 (EPERPHAPEADGEP) has biased composition (basic and acidic residues). Residues 644-962 (FVFPGQGSQW…VAEAHVHGVA (319 aa)) form the Malonyl-CoA:ACP transacylase (MAT) domain. The segment at 1012–1139 (HPLLGAAIPL…GTLAPGGGHP (128 aa)) is N-terminal hotdog fold. Residues 1012–1289 (HPLLGAAIPL…MRPVTAEALH (278 aa)) form the PKS/mFAS DH domain. Residue His-1045 is the Proton acceptor; for dehydratase activity of the active site. Positions 1113-1152 (SRPEDAGADEPWTRHAEGTLAPGGGHPRQDPGPWPPTGAR) are disordered. Residues 1151 to 1289 (AREIDLDDCY…MRPVTAEALH (139 aa)) form a C-terminal hotdog fold region. The active-site Proton donor; for dehydratase activity is the Asp-1211. The region spanning 1494-1671 (GTVLVTGGLG…GVSMGWGMWA (178 aa)) is the Ketoreductase (KR) domain. The 76-residue stretch at 1777–1852 (ALLLGVVRGH…ALSRYLRTLL (76 aa)) folds into the Carrier domain. Ser-1812 carries the O-(pantetheine 4'-phosphoryl)serine modification. The interval 1854-1873 (PDPAPAPTAPDGQPGPDQAD) is disordered. Low complexity predominate over residues 1862 to 1871 (APDGQPGPDQ).

The spectinabilin polyketide synthase complex is composed of 4 proteins, NorA, NorA', NorB and NorC. The complex comprises 6 modules with a total of 28 catalytic domains catalyzing 7 chain elongations. NorA comprises one module, NorA' two modules, NorB one module and NorC two modules. Pantetheine 4'-phosphate serves as cofactor.

It catalyses the reaction 4-nitrobenzoyl-CoA + 6 (S)-methylmalonyl-CoA + malonyl-CoA + 6 NADPH + 12 H(+) = demethyldeoxyspectinabilin + 7 CO2 + 6 NADP(+) + 8 CoA + 5 H2O. It participates in antibiotic biosynthesis. It functions in the pathway polyketide biosynthesis. Functionally, component of a type I modular polyketide synthase (PKS) that generates the backbone of the antibiotic spectinabilin (also known as neoaureothin), a nitroaryl-substituted polyketide metabolite. This PKS system accepts the unusual starter unit 4-nitrobenzoyl-CoA and extends it by 6 molecules of (S)-methylmalonyl-CoA and a single molecule of malonyl-CoA. The first module, NorA, is used twice in an iterative fashion. The chain is Spectinabilin polyketide synthase system protein NorA from Streptomyces orinoci (Streptoverticillium orinoci).